We begin with the raw amino-acid sequence, 259 residues long: Thiazole synthase (259 aa).

Residue K99 is the Schiff-base intermediate with DXP of the active site. Residues G161, 187–188, and 209–210 each bind 1-deoxy-D-xylulose 5-phosphate; these read AG and NT.

Belongs to the ThiG family. In terms of assembly, homotetramer. Forms heterodimers with either ThiH or ThiS.

The protein resides in the cytoplasm. The enzyme catalyses [ThiS sulfur-carrier protein]-C-terminal-Gly-aminoethanethioate + 2-iminoacetate + 1-deoxy-D-xylulose 5-phosphate = [ThiS sulfur-carrier protein]-C-terminal Gly-Gly + 2-[(2R,5Z)-2-carboxy-4-methylthiazol-5(2H)-ylidene]ethyl phosphate + 2 H2O + H(+). The protein operates within cofactor biosynthesis; thiamine diphosphate biosynthesis. Catalyzes the rearrangement of 1-deoxy-D-xylulose 5-phosphate (DXP) to produce the thiazole phosphate moiety of thiamine. Sulfur is provided by the thiocarboxylate moiety of the carrier protein ThiS. In vitro, sulfur can be provided by H(2)S. In Nautilia profundicola (strain ATCC BAA-1463 / DSM 18972 / AmH), this protein is Thiazole synthase.